Consider the following 251-residue polypeptide: PF03932 family protein CutC (251 aa).

This sequence belongs to the CutC family.

The protein localises to the cytoplasm. The polypeptide is PF03932 family protein CutC (Bacteroides fragilis (strain YCH46)).